The primary structure comprises 166 residues: NAD(P)H-quinone oxidoreductase subunit I, chloroplastic (166 aa).

4Fe-4S ferredoxin-type domains lie at 55-84 (GRIH…VDWK) and 95-124 (LNYS…MTEE). The [4Fe-4S] cluster site is built by cysteine 64, cysteine 67, cysteine 70, cysteine 74, cysteine 104, cysteine 107, cysteine 110, and cysteine 114.

The protein belongs to the complex I 23 kDa subunit family. NDH is composed of at least 16 different subunits, 5 of which are encoded in the nucleus. [4Fe-4S] cluster serves as cofactor.

It is found in the plastid. The protein localises to the chloroplast thylakoid membrane. The enzyme catalyses a plastoquinone + NADH + (n+1) H(+)(in) = a plastoquinol + NAD(+) + n H(+)(out). It carries out the reaction a plastoquinone + NADPH + (n+1) H(+)(in) = a plastoquinol + NADP(+) + n H(+)(out). In terms of biological role, NDH shuttles electrons from NAD(P)H:plastoquinone, via FMN and iron-sulfur (Fe-S) centers, to quinones in the photosynthetic chain and possibly in a chloroplast respiratory chain. The immediate electron acceptor for the enzyme in this species is believed to be plastoquinone. Couples the redox reaction to proton translocation, and thus conserves the redox energy in a proton gradient. In Oteiza scandens (Climbing oteiza), this protein is NAD(P)H-quinone oxidoreductase subunit I, chloroplastic.